The chain runs to 259 residues: Phosphate import ATP-binding protein PstB (259 aa).

One can recognise an ABC transporter domain in the interval 5 to 248 (IDVSGLHVYY…NKIFTKPEKK (244 aa)). 37-44 (GSSGCGKS) provides a ligand contact to ATP.

It belongs to the ABC transporter superfamily. Phosphate importer (TC 3.A.1.7) family. In terms of assembly, the complex is composed of two ATP-binding proteins (PstB), two transmembrane proteins (PstC and PstA) and a solute-binding protein (PstS).

The protein localises to the cell membrane. It catalyses the reaction phosphate(out) + ATP + H2O = ADP + 2 phosphate(in) + H(+). In terms of biological role, part of the ABC transporter complex PstSACB involved in phosphate import. Responsible for energy coupling to the transport system. The chain is Phosphate import ATP-binding protein PstB from Thermobifida fusca (strain YX).